The primary structure comprises 191 residues: MQVILLERIAKLGQMGEVVKVRDGFARNYLLPTGKALRANAANKARFDAERSTLEARNLERKSEAQTVADVLNGKSFIVVRSAGETGQLYGSVAARDIIEALAAEGFTVSRNQVELNNPIKTIGLHNVTMHLHAEVEIAIEINVARSAEEAERQAKGESLTSADAIYGVDEDALRPEDFFDPDADRDGDDE.

The tract at residues 150 to 191 is disordered; it reads EAERQAKGESLTSADAIYGVDEDALRPEDFFDPDADRDGDDE. The segment covering 179–191 has biased composition (acidic residues); it reads FFDPDADRDGDDE.

The protein belongs to the bacterial ribosomal protein bL9 family.

Binds to the 23S rRNA. In Allorhizobium ampelinum (strain ATCC BAA-846 / DSM 112012 / S4) (Agrobacterium vitis (strain S4)), this protein is Large ribosomal subunit protein bL9.